A 469-amino-acid polypeptide reads, in one-letter code: Light-independent protochlorophyllide reductase subunit N (469 aa).

The [4Fe-4S] cluster site is built by cysteine 24, cysteine 49, and cysteine 109.

The protein belongs to the BchN/ChlN family. As to quaternary structure, protochlorophyllide reductase is composed of three subunits; ChlL, ChlN and ChlB. Forms a heterotetramer of two ChlB and two ChlN subunits. The cofactor is [4Fe-4S] cluster.

It carries out the reaction chlorophyllide a + oxidized 2[4Fe-4S]-[ferredoxin] + 2 ADP + 2 phosphate = protochlorophyllide a + reduced 2[4Fe-4S]-[ferredoxin] + 2 ATP + 2 H2O. It functions in the pathway porphyrin-containing compound metabolism; chlorophyll biosynthesis (light-independent). Component of the dark-operative protochlorophyllide reductase (DPOR) that uses Mg-ATP and reduced ferredoxin to reduce ring D of protochlorophyllide (Pchlide) to form chlorophyllide a (Chlide). This reaction is light-independent. The NB-protein (ChlN-ChlB) is the catalytic component of the complex. The protein is Light-independent protochlorophyllide reductase subunit N of Gloeobacter violaceus (strain ATCC 29082 / PCC 7421).